The sequence spans 211 residues: Large ribosomal subunit protein bL9 (211 aa).

Residues 183–211 form a disordered region; that stretch reads AAASEDEELAETAGVAPAEPSEEDDSAKA. Acidic residues predominate over residues 202 to 211; that stretch reads PSEEDDSAKA.

Belongs to the bacterial ribosomal protein bL9 family.

Its function is as follows. Binds to the 23S rRNA. This Roseobacter denitrificans (strain ATCC 33942 / OCh 114) (Erythrobacter sp. (strain OCh 114)) protein is Large ribosomal subunit protein bL9.